Reading from the N-terminus, the 598-residue chain is Aspartate--tRNA(Asp/Asn) ligase (598 aa).

Residue glutamate 177 participates in L-aspartate binding. An aspartate region spans residues glutamine 201–lysine 204. The L-aspartate site is built by arginine 223 and histidine 451. ATP is bound at residue arginine 223–glutamate 225. An ATP-binding site is contributed by glutamate 485. Arginine 492 contacts L-aspartate. Glycine 537–arginine 540 serves as a coordination point for ATP.

Belongs to the class-II aminoacyl-tRNA synthetase family. Type 1 subfamily. In terms of assembly, homodimer.

The protein localises to the cytoplasm. It carries out the reaction tRNA(Asx) + L-aspartate + ATP = L-aspartyl-tRNA(Asx) + AMP + diphosphate. Aspartyl-tRNA synthetase with relaxed tRNA specificity since it is able to aspartylate not only its cognate tRNA(Asp) but also tRNA(Asn). Reaction proceeds in two steps: L-aspartate is first activated by ATP to form Asp-AMP and then transferred to the acceptor end of tRNA(Asp/Asn). The chain is Aspartate--tRNA(Asp/Asn) ligase from Anaplasma phagocytophilum (strain HZ).